The following is a 427-amino-acid chain: Serine--tRNA ligase (427 aa).

230–232 lines the L-serine pocket; sequence TAE. 261–263 is an ATP binding site; that stretch reads RAE. Residue Glu284 participates in L-serine binding. 348-351 contacts ATP; that stretch reads EISS. Residue Ser384 participates in L-serine binding.

Belongs to the class-II aminoacyl-tRNA synthetase family. Type-1 seryl-tRNA synthetase subfamily. Homodimer. The tRNA molecule binds across the dimer.

Its subcellular location is the cytoplasm. It catalyses the reaction tRNA(Ser) + L-serine + ATP = L-seryl-tRNA(Ser) + AMP + diphosphate + H(+). It carries out the reaction tRNA(Sec) + L-serine + ATP = L-seryl-tRNA(Sec) + AMP + diphosphate + H(+). Its pathway is aminoacyl-tRNA biosynthesis; selenocysteinyl-tRNA(Sec) biosynthesis; L-seryl-tRNA(Sec) from L-serine and tRNA(Sec): step 1/1. In terms of biological role, catalyzes the attachment of serine to tRNA(Ser). Is also able to aminoacylate tRNA(Sec) with serine, to form the misacylated tRNA L-seryl-tRNA(Sec), which will be further converted into selenocysteinyl-tRNA(Sec). The protein is Serine--tRNA ligase of Moorella thermoacetica (strain ATCC 39073 / JCM 9320).